The chain runs to 1091 residues: Multiple epidermal growth factor-like domains protein 11 (1091 aa).

A signal peptide spans 1 to 18 (MAPSAVGLLVFLLQAALA). At 19–847 (LNPEDPNVCS…SPALGAERHS (829 aa)) the chain is on the extracellular side. Positions 23–100 (DPNVCSHWES…YYENGDFCIP (78 aa)) constitute an EMI domain. Cystine bridges form between cysteine 27-cysteine 88, cysteine 53-cysteine 62, cysteine 87-cysteine 98, cysteine 102-cysteine 117, cysteine 119-cysteine 128, cysteine 145-cysteine 153, cysteine 147-cysteine 160, cysteine 162-cysteine 171, cysteine 184-cysteine 196, cysteine 190-cysteine 203, cysteine 205-cysteine 214, cysteine 227-cysteine 239, cysteine 233-cysteine 246, and cysteine 248-cysteine 257. 9 consecutive EGF-like domains span residues 94 to 129 (NGDF…PDCS), 142 to 172 (SNRC…WRCE), 180 to 215 (HGKG…VYCE), 223 to 258 (HGAH…AVCA), 266 to 301 (FGQN…DRCQ), 314 to 344 (SQRC…PSCQ), 398 to 433 (YGNG…EVCA), 441 to 476 (YGPN…LDCS), and 484 to 519 (WGLN…DSCE). N-linked (GlcNAc...) asparagine glycosylation occurs at asparagine 269. Intrachain disulfides connect cysteine 270-cysteine 282, cysteine 276-cysteine 289, cysteine 291-cysteine 300, cysteine 317-cysteine 325, cysteine 319-cysteine 332, cysteine 334-cysteine 343, cysteine 402-cysteine 414, cysteine 408-cysteine 421, cysteine 423-cysteine 432, cysteine 445-cysteine 457, cysteine 451-cysteine 464, cysteine 466-cysteine 475, cysteine 488-cysteine 500, cysteine 494-cysteine 507, and cysteine 509-cysteine 518. An N-linked (GlcNAc...) asparagine glycan is attached at asparagine 530. EGF-like domains follow at residues 570–605 (WGPN…PLCQ), 613–650 (YGHG…ALCN), 658–693 (FGQD…KDCS), 706–736 (FHTC…LFCT), 749–779 (GHIC…RHCE), and 787–822 (FGYG…IRCD). Intrachain disulfides connect cysteine 574/cysteine 586, cysteine 580/cysteine 593, cysteine 595/cysteine 604, cysteine 617/cysteine 631, cysteine 621/cysteine 638, cysteine 640/cysteine 649, cysteine 662/cysteine 674, cysteine 668/cysteine 681, cysteine 683/cysteine 692, cysteine 709/cysteine 717, cysteine 711/cysteine 724, cysteine 726/cysteine 735, cysteine 752/cysteine 760, cysteine 754/cysteine 767, cysteine 769/cysteine 778, cysteine 791/cysteine 803, cysteine 797/cysteine 810, and cysteine 812/cysteine 821. A helical transmembrane segment spans residues 848 to 868 (VGAVTGIVLLLFLVVVLLGLF). The Cytoplasmic segment spans residues 869–1091 (AWRRRRQKEK…NIYEVGRCLT (223 aa)).

The protein belongs to the MEGF family. Homomer. Does not interact with MEGF10.

Its subcellular location is the cell membrane. The protein resides in the basolateral cell membrane. In terms of biological role, may regulate the mosaic spacing of specific neuron subtypes in the retina through homotypic retinal neuron repulsion. Mosaics provide a mechanism to distribute each cell type evenly across the retina, ensuring that all parts of the visual field have access to a full set of processing elements. This is Multiple epidermal growth factor-like domains protein 11 (Megf11) from Mus musculus (Mouse).